The following is a 302-amino-acid chain: Ribosomal protein L11 methyltransferase (302 aa).

Threonine 148, glycine 169, aspartate 191, and asparagine 237 together coordinate S-adenosyl-L-methionine.

This sequence belongs to the methyltransferase superfamily. PrmA family.

The protein resides in the cytoplasm. It carries out the reaction L-lysyl-[protein] + 3 S-adenosyl-L-methionine = N(6),N(6),N(6)-trimethyl-L-lysyl-[protein] + 3 S-adenosyl-L-homocysteine + 3 H(+). Its function is as follows. Methylates ribosomal protein L11. This Desulfosudis oleivorans (strain DSM 6200 / JCM 39069 / Hxd3) (Desulfococcus oleovorans) protein is Ribosomal protein L11 methyltransferase.